We begin with the raw amino-acid sequence, 174 residues long: Peptide deformylase (174 aa).

The Fe cation site is built by Cys94 and His136. Residue Glu137 is part of the active site. His140 is a binding site for Fe cation.

Belongs to the polypeptide deformylase family. The cofactor is Fe(2+).

The catalysed reaction is N-terminal N-formyl-L-methionyl-[peptide] + H2O = N-terminal L-methionyl-[peptide] + formate. Its function is as follows. Removes the formyl group from the N-terminal Met of newly synthesized proteins. Requires at least a dipeptide for an efficient rate of reaction. N-terminal L-methionine is a prerequisite for activity but the enzyme has broad specificity at other positions. This chain is Peptide deformylase, found in Maricaulis maris (strain MCS10) (Caulobacter maris).